Reading from the N-terminus, the 427-residue chain is 11-beta-hydroxysteroid dehydrogenase type 2 (427 aa).

82–111 provides a ligand contact to NAD(+); that stretch reads TRAVLITGCDSGFGNATAKKLDAMGFTVLA. Residue Ser-219 coordinates substrate. Tyr-232 functions as the Proton acceptor in the catalytic mechanism.

The protein belongs to the short-chain dehydrogenases/reductases (SDR) family. In terms of assembly, interacts with ligand-free cytoplasmic NR3C2. In terms of tissue distribution, highly expressed in the kidney and adrenal and at lower levels in the colon.

Its subcellular location is the microsome. It localises to the endoplasmic reticulum. It carries out the reaction an 11beta-hydroxysteroid + NAD(+) = an 11-oxosteroid + NADH + H(+). It catalyses the reaction corticosterone + NAD(+) = 11-dehydrocorticosterone + NADH + H(+). The catalysed reaction is cortisol + NAD(+) = cortisone + NADH + H(+). The enzyme catalyses 11beta,17beta-dihydroxyandrost-4-ene-3-one + NAD(+) = 17beta-hydroxyandrost-4-ene-3,11-dione + NADH + H(+). It carries out the reaction 11beta-hydroxyandrost-4-ene-3,17-dione + NAD(+) = androst-4-ene-3,11,17-trione + NADH + H(+). The protein operates within steroid metabolism. With respect to regulation, inhibited by glycyrrhetinic acid, carbenoloxone, 11-alpha-OH-progesterone and 11-beta-OH-progesterone. Functionally, catalyzes the conversion of biologically active 11beta-hydroxyglucocorticoids (11beta-hydroxysteroid) such as cortisol, to inactive 11-ketoglucocorticoids (11-oxosteroid) such as cortisone, in the presence of NAD(+). Functions as a dehydrogenase (oxidase), thereby decreasing the concentration of active glucocorticoids, thus protecting the nonselective mineralocorticoid receptor from occupation by glucocorticoids. Plays an important role in maintaining glucocorticoids balance during preimplantation and protects the fetus from excessive maternal corticosterone exposure. Catalyzes the oxidation of 11beta-hydroxytestosterone (11beta,17beta-dihydroxyandrost-4-ene-3-one) to 11-ketotestosterone (17beta-hydroxyandrost-4-ene-3,11-dione), a major bioactive androgen. Catalyzes the conversion of 11beta-hydroxyandrostenedione (11beta-hydroxyandrost-4-ene-3,17-dione) to 11-ketoandrostenedione (androst-4-ene-3,11,17-trione), which can be further metabolized to 11-ketotestosterone. Converts 7-beta-25-dihydroxycholesterol to 7-oxo-25-hydroxycholesterol in vitro. 7-beta-25-dihydroxycholesterol (not 7-oxo-25-hydroxycholesterol) acts as a ligand for the G-protein-coupled receptor (GPCR) Epstein-Barr virus-induced gene 2 (EBI2) and may thereby regulate immune cell migration. May protect ovulating oocytes and fertilizing spermatozoa from the adverse effects of cortisol. This chain is 11-beta-hydroxysteroid dehydrogenase type 2 (HSD11B2), found in Ovis aries (Sheep).